Here is a 607-residue protein sequence, read N- to C-terminus: MDDDKGTDTAKEGCSTWCLLEAACSDDSDLDDSLEKLFEENAESDVSDLINDDDNAAQGNSRELLCQQESEECEQQIQYLKRKYNISPEAVQQLSPRLQSLNLSPGHKSKRRLFVEQDSGLELSLNEVEDFTQELEVPASAPGPAAQGGVGLGHIESLLRCKNAKAVLLHKFKEGFGISYNELTRQFKSNKTCCKHWVLAIYGAKEELIDASKQLLQQHCSYIWLQTYTPMSLYLCCFNVAKSRETVVKLLISMLQIHENHILSEPPKNRSVPVALFWYKGSMNPNVYAFGEYPEWIVTQTMIQHQTADSIQFDLSRMIQWAYDNDHLDECSIAYNYAKLADTDSNARAFLAQNSQAKHVRDCAQMVKHYKRGEMREMTISAWVHHCISRIEGDGQWQDIVKFLRYQGLNFIVFLDKFRTFLQNFPKKNCLLIYGPPDTGKSMFTMSLMKALRGQVISFANSKSQFWLQPLADAKIALLDDATEVCWQYIDMFLRNGLDGNVVSLDMKHRAPCQMKFPPLIITSNISLKKEKKFPYLHSRIYEFEFPNRFPFDSDDKPLFKLTDQSWASFFKRLWIQLGLSDQEDEGEDGSTQRTFQCTTRQVNGPV.

The short motif at 81–83 (KRK) is the Nuclear localization signal element. Phosphoserine; by host is present on residues serine 87 and serine 95. Residues 94–103 (LSPRLQSLNL) carry the Nuclear export signal motif. The interval 147-310 (QGGVGLGHIE…TMIQHQTADS (164 aa)) is DNA-binding region. Residues 409 to 559 (LNFIVFLDKF…FPFDSDDKPL (151 aa)) enclose the SF3 helicase domain. 435 to 442 (GPPDTGKS) is a binding site for ATP. A Glycyl lysine isopeptide (Lys-Gly) (interchain with G-Cter in SUMO) cross-link involves residue lysine 516. Positions 583 to 607 (QEDEGEDGSTQRTFQCTTRQVNGPV) are disordered. Residues 590-607 (GSTQRTFQCTTRQVNGPV) are compositionally biased toward polar residues.

The protein belongs to the papillomaviridae E1 protein family. As to quaternary structure, can form hexamers. Interacts with E2 protein; this interaction increases E1 DNA binding specificity. Interacts with host DNA polymerase subunit POLA2. Interacts with host single stranded DNA-binding protein RPA1. Interacts with host TOP1; this interaction stimulates the enzymatic activity of TOP1. Post-translationally, phosphorylated. In terms of processing, sumoylated.

The protein localises to the host nucleus. The enzyme catalyses Couples ATP hydrolysis with the unwinding of duplex DNA by translocating in the 3'-5' direction.. It catalyses the reaction ATP + H2O = ADP + phosphate + H(+). Its function is as follows. ATP-dependent DNA 3'-5' helicase required for initiation of viral DNA replication. It forms a complex with the viral E2 protein. The E1-E2 complex binds to the replication origin which contains binding sites for both proteins. During the initial step, a dimer of E1 interacts with a dimer of protein E2 leading to a complex that binds the viral origin of replication with high specificity. Then, a second dimer of E1 displaces the E2 dimer in an ATP-dependent manner to form the E1 tetramer. Following this, two E1 monomers are added to each half of the site, which results in the formation of two E1 trimers on the viral ori. Subsequently, two hexamers will be created. The double hexamer acts as a bi-directional helicase machinery and unwinds the viral DNA and then recruits the host DNA polymerase to start replication. The sequence is that of Replication protein E1 from Human papillomavirus 23.